A 721-amino-acid polypeptide reads, in one-letter code: Zinc-transporting ATPase (721 aa).

The Cytoplasmic portion of the chain corresponds to 1–107 (MTQSSPLKTQ…HSHGAGEFNL (107 aa)). Residues 8-74 (KTQQMQVGGM…RIAALGYTLA (67 aa)) form the HMA domain. Positions 19 and 22 each coordinate Zn(2+). Positions 80-101 (VTLNGHKHPHSHREEGHSHSHG) are disordered. A helical membrane pass occupies residues 108 to 128 (KQELLPVLTAIALFTIAILFE). Topologically, residues 129-140 (QPLHNTPGQIAE) are extracellular. The chain crosses the membrane as a helical span at residues 141-160 (FAVIIPAYLLSGWTVLKTAG). Residues 161-167 (RNILRGQ) lie on the Cytoplasmic side of the membrane. A helical transmembrane segment spans residues 168 to 187 (IFDENFLMTIATLGALAIHQ). Over 188–190 (LPE) the chain is Extracellular. Residues 191–210 (AVAVMLFFRVGELFQEYSVG) form a helical membrane-spanning segment. Over 211 to 344 (RSRRSIKALL…ITQFARYYTP (134 aa)) the chain is Cytoplasmic. Residues 345-363 (VIVFLSLAVALLPPLFIPG) traverse the membrane as a helical segment. Residues 364 to 369 (ADRADW) are Extracellular-facing. The chain crosses the membrane as a helical span at residues 370–387 (VYRALVLLVISCPCGLVI). The Cytoplasmic portion of the chain corresponds to 388–671 (SIPLGYFGGI…AIHVARKTRQ (284 aa)). The 4-aspartylphosphate intermediate role is filled by Asp425. Positions 618 and 622 each coordinate Mg(2+). The chain crosses the membrane as a helical span at residues 672–693 (IVVQNIVLALGIKALFIALGTI). Residues 694 to 701 (GLATLWEA) lie on the Extracellular side of the membrane. Residues 702–717 (VFADVGVALLAILNAT) form a helical membrane-spanning segment. Residues 718–721 (RIAK) are Cytoplasmic-facing.

This sequence belongs to the cation transport ATPase (P-type) (TC 3.A.3) family. Type IB subfamily.

The protein localises to the cell membrane. It catalyses the reaction Zn(2+)(in) + ATP + H2O = Zn(2+)(out) + ADP + phosphate + H(+). The polypeptide is Zinc-transporting ATPase (ziaA) (Synechocystis sp. (strain ATCC 27184 / PCC 6803 / Kazusa)).